The following is a 345-amino-acid chain: tRNA N6-adenosine threonylcarbamoyltransferase (345 aa).

Residues histidine 117 and histidine 121 each coordinate Fe cation. Residues leucine 140–glycine 144, aspartate 173, glycine 186, and asparagine 279 each bind substrate. Aspartate 307 provides a ligand contact to Fe cation.

This sequence belongs to the KAE1 / TsaD family. Fe(2+) is required as a cofactor.

The protein localises to the cytoplasm. The enzyme catalyses L-threonylcarbamoyladenylate + adenosine(37) in tRNA = N(6)-L-threonylcarbamoyladenosine(37) in tRNA + AMP + H(+). Required for the formation of a threonylcarbamoyl group on adenosine at position 37 (t(6)A37) in tRNAs that read codons beginning with adenine. Is involved in the transfer of the threonylcarbamoyl moiety of threonylcarbamoyl-AMP (TC-AMP) to the N6 group of A37, together with TsaE and TsaB. TsaD likely plays a direct catalytic role in this reaction. In Verminephrobacter eiseniae (strain EF01-2), this protein is tRNA N6-adenosine threonylcarbamoyltransferase.